The sequence spans 21 residues: Cupiennin-6d (21 aa).

Ser-21 is modified (serine amide).

Expressed by the venom gland.

The protein localises to the secreted. The polypeptide is Cupiennin-6d (Cupiennius salei (American wandering spider)).